Reading from the N-terminus, the 378-residue chain is Inner membrane protein YibH (378 aa).

Residues 1–3 (MDL) are Periplasmic-facing. Residues 4-24 (LIVLTYVALAWAVFKIFRIPV) form a helical membrane-spanning segment. The Cytoplasmic portion of the chain corresponds to 25-26 (NQ). Residues 27–47 (WTLATAALGGVFLVSGLILLM) form a helical membrane-spanning segment. Residues 48–54 (NYNHPYT) lie on the Periplasmic side of the membrane. Residues 55–75 (FTAQKAVIAIPITPQVTGIVT) traverse the membrane as a helical segment. Residues 76 to 232 (EVTDKNNQLI…RAPSNGYVTQ (157 aa)) lie on the Cytoplasmic side of the membrane. The chain crosses the membrane as a helical span at residues 233 to 253 (VLIRPGTYAAALPLRPVMVFI). At 254-280 (PEQKRQIVAQFRQNSLLRLKPGDDAEV) the chain is on the periplasmic side. Residues 281–301 (VFNALPGQVFHGKLTSILPVV) traverse the membrane as a helical segment. Residues 302–309 (PGGSYQAQ) lie on the Cytoplasmic side of the membrane. Residues 310–330 (GVLQSLTVVPGTDGVLGTIEL) form a helical membrane-spanning segment. The Periplasmic portion of the chain corresponds to 331–378 (DPNDDIDALPDGIYAQVAVYSDHFSHVSVMRKVLLRMTSWMHYLYLDH).

It belongs to the membrane fusion protein (MFP) (TC 8.A.1) family.

It is found in the cell inner membrane. In Escherichia coli O157:H7, this protein is Inner membrane protein YibH (yibH).